The following is a 72-amino-acid chain: Disintegrin crotatroxin (72 aa).

A Disintegrin domain is found at 1 to 72; the sequence is AGEECDCGSP…ADCPRNGLYG (72 aa). 6 disulfides stabilise this stretch: C5–C20, C7–C15, C14–C37, C28–C34, C33–C58, and C46–C65. The Cell attachment site motif lies at 50-52; that stretch reads RGD.

The protein belongs to the venom metalloproteinase (M12B) family. P-II subfamily. P-IIa sub-subfamily. In terms of assembly, monomer. As to expression, expressed by the venom gland.

The protein resides in the secreted. Inhibits fibrinogen interaction with platelets. Acts by binding to the alpha-IIb/beta-3 (ITGA2B/ITGB3) on the platelet surface and inhibits aggregation induced by ADP, thrombin, platelet-activating factor and collagen. In terms of biological role, inhibits ADP-induced platelet aggregation (IC(50) = 17.5nM), cancer cell migration in vitro, and experimental lung tumor colonization of cancer cells. The sequence is that of Disintegrin crotatroxin from Crotalus atrox (Western diamondback rattlesnake).